We begin with the raw amino-acid sequence, 424 residues long: MSDSKCDSQFYSVQVADSTFTVLKRYQQLKPIGSGAQGIVCAAFDTVLGINVAVKKLSRPFQNQTHAKRAYRELVLLKCVNHKNIISLLNVFTPQKTLEEFQDVYLVMELMDANLCQVIHMELDHERMSYLLYQMLCGIKHLHSAGIIHRDLKPSNIVVKSDCTLKILDFGLARTACTNFMMTPYVVTRYYRAPEVILGMGYKENVDIWSVGCIMGELVKGCVIFQGTDHIDQWNKVIEQLGTPSAEFMKKLQPTVRNYVENRPKYPGIKFEELFPDWIFPSESERDKIKTSQARDLLSKMLVIDPDKRISVDEALRHPYITVWYDPAEAEAPPPQIYDAQLEEREHAIEEWKELIYKEVMDWEERSKNGVVKDQPSDAAVSSNATPSQSSSINDISSMSTEQTLASDTDSSLDASTGPLEGCR.

Residues 26–321 (YQQLKPIGSG…VDEALRHPYI (296 aa)) form the Protein kinase domain. ATP contacts are provided by residues 32-40 (IGSGAQGIV) and Lys55. The active-site Proton acceptor is the Asp151. Position 183 is a phosphothreonine; by MAP2K7 (Thr183). Residues 183–185 (TPY) carry the TXY motif. Tyr185 carries the phosphotyrosine; by MAP2K4 modification. A disordered region spans residues 368 to 424 (KNGVVKDQPSDAAVSSNATPSQSSSINDISSMSTEQTLASDTDSSLDASTGPLEGCR). The span at 388-417 (SQSSSINDISSMSTEQTLASDTDSSLDAST) shows a compositional bias: low complexity.

This sequence belongs to the protein kinase superfamily. CMGC Ser/Thr protein kinase family. MAP kinase subfamily. In terms of assembly, interacts with MECOM. Interacts with DCLK2. Binds to at least four scaffolding proteins, MAPK8IP1/JIP-1, MAPK8IP2/JIP-2, MAPK8IP3/JIP-3/JSAP1 and SPAG9/MAPK8IP4/JIP-4. These proteins also bind other components of the JNK signaling pathway. Interacts with NFATC4. Interacts with ATF7; the interaction does not phosphorylate ATF7 but acts as a docking site for ATF7-associated partners such as JUN. Interacts with BCL10. Interacts with CTNNB1 and GSK3B. Interacts with MAPKBP1. Interacts with POU5F1; phosphorylates POU5F1 at 'Ser-355'. Found in a complex with SH3RF1, RAC2, MAP3K7/TAK1, MAP2K7/MKK7, MAPK8IP1/JIP1 and MAPK8/JNK1. Mg(2+) serves as cofactor. In terms of processing, dually phosphorylated on Thr-183 and Tyr-185 by MAP2K7 and MAP2K4, which activates the enzyme. Autophosphorylated in vitro.

It localises to the cytoplasm. Its subcellular location is the nucleus. It carries out the reaction L-seryl-[protein] + ATP = O-phospho-L-seryl-[protein] + ADP + H(+). The catalysed reaction is L-threonyl-[protein] + ATP = O-phospho-L-threonyl-[protein] + ADP + H(+). With respect to regulation, activated by threonine and tyrosine phosphorylation by either of two dual specificity kinases, MAP2K4 and MAP2K7. MAP2K4 shows a strong preference for Tyr-185 while MAP2K7 phosphorylates Tyr-183 preferentially. Inhibited by dual specificity phosphatases, such as DUSP1. Its function is as follows. Serine/threonine-protein kinase involved in various processes such as cell proliferation, differentiation, migration, transformation and programmed cell death. Extracellular stimuli such as pro-inflammatory cytokines or physical stress stimulate the stress-activated protein kinase/c-Jun N-terminal kinase (SAP/JNK) signaling pathway. In this cascade, two dual specificity kinases MAP2K4/MKK4 and MAP2K7/MKK7 phosphorylate and activate MAPK9/JNK2. In turn, MAPK9/JNK2 phosphorylates a number of transcription factors, primarily components of AP-1 such as JUN and ATF2 and thus regulates AP-1 transcriptional activity. In response to oxidative or ribotoxic stresses, inhibits rRNA synthesis by phosphorylating and inactivating the RNA polymerase 1-specific transcription initiation factor RRN3. Promotes stressed cell apoptosis by phosphorylating key regulatory factors including TP53 and YAP1. In T-cells, MAPK8 and MAPK9 are required for polarized differentiation of T-helper cells into Th1 cells. Upon T-cell receptor (TCR) stimulation, is activated by CARMA1, BCL10, MAP2K7 and MAP3K7/TAK1 to regulate JUN protein levels. Plays an important role in the osmotic stress-induced epithelial tight-junctions disruption. When activated, promotes beta-catenin/CTNNB1 degradation and inhibits the canonical Wnt signaling pathway. Also participates in neurite growth in spiral ganglion neurons. Phosphorylates the CLOCK-BMAL1 heterodimer and plays a role in the regulation of the circadian clock. Phosphorylates POU5F1, which results in the inhibition of POU5F1's transcriptional activity and enhances its proteasomal degradation. Phosphorylates ALKBH5 in response to reactive oxygen species (ROS), promoting ALKBH5 sumoylation and inactivation. Functionally, MAPK9 isoforms display different binding patterns: alpha-1 and alpha-2 preferentially bind to JUN, whereas beta-1 and beta-2 bind to ATF2. However, there is no correlation between binding and phosphorylation, which is achieved at about the same efficiency by all isoforms. JUNB is not a substrate for JNK2 alpha-2, and JUND binds only weakly to it. The polypeptide is Mitogen-activated protein kinase 9 (MAPK9) (Homo sapiens (Human)).